Here is a 259-residue protein sequence, read N- to C-terminus: Type III pantothenate kinase (259 aa).

Residue 6-13 coordinates ATP; that stretch reads DTGNTNTV. Residue 107–110 coordinates substrate; that stretch reads GPDR. The active-site Proton acceptor is Asp109. Asp129 provides a ligand contact to K(+). Residue Thr132 coordinates ATP. Substrate is bound at residue Thr184.

Belongs to the type III pantothenate kinase family. Homodimer. Requires NH4(+) as cofactor. K(+) is required as a cofactor.

It localises to the cytoplasm. It carries out the reaction (R)-pantothenate + ATP = (R)-4'-phosphopantothenate + ADP + H(+). It functions in the pathway cofactor biosynthesis; coenzyme A biosynthesis; CoA from (R)-pantothenate: step 1/5. Its function is as follows. Catalyzes the phosphorylation of pantothenate (Pan), the first step in CoA biosynthesis. The sequence is that of Type III pantothenate kinase from Paracoccus denitrificans (strain Pd 1222).